A 469-amino-acid polypeptide reads, in one-letter code: GTPase Der (469 aa).

2 EngA-type G domains span residues 3–167 (PTVA…PDEV) and 175–348 (PKFA…RAAM). GTP contacts are provided by residues 9–16 (GRPNVGKS), 56–60 (DTGGF), 119–122 (NKAE), 181–188 (GRPNVGKS), 228–232 (DTAGV), and 293–296 (NKWD). In terms of domain architecture, KH-like spans 349–433 (SKLATPKLTR…PLRVQYKSSE (85 aa)). Positions 429-469 (YKSSENPFDNDEKDKPRAKPKPMSKMRGREKEVRYGKNSKK) are disordered.

Belongs to the TRAFAC class TrmE-Era-EngA-EngB-Septin-like GTPase superfamily. EngA (Der) GTPase family. Associates with the 50S ribosomal subunit.

Functionally, GTPase that plays an essential role in the late steps of ribosome biogenesis. The polypeptide is GTPase Der (Chromobacterium violaceum (strain ATCC 12472 / DSM 30191 / JCM 1249 / CCUG 213 / NBRC 12614 / NCIMB 9131 / NCTC 9757 / MK)).